The chain runs to 161 residues: Putative 4-hydroxy-4-methyl-2-oxoglutarate aldolase (161 aa).

Residues 77 to 80 (GGNL) and arginine 99 each bind substrate. Position 100 (aspartate 100) interacts with a divalent metal cation.

Belongs to the class II aldolase/RraA-like family. As to quaternary structure, homotrimer. It depends on a divalent metal cation as a cofactor.

It catalyses the reaction 4-hydroxy-4-methyl-2-oxoglutarate = 2 pyruvate. The catalysed reaction is oxaloacetate + H(+) = pyruvate + CO2. Catalyzes the aldol cleavage of 4-hydroxy-4-methyl-2-oxoglutarate (HMG) into 2 molecules of pyruvate. Also contains a secondary oxaloacetate (OAA) decarboxylase activity due to the common pyruvate enolate transition state formed following C-C bond cleavage in the retro-aldol and decarboxylation reactions. The sequence is that of Putative 4-hydroxy-4-methyl-2-oxoglutarate aldolase from Methylococcus capsulatus (strain ATCC 33009 / NCIMB 11132 / Bath).